The primary structure comprises 352 residues: Photosystem II D2 protein (352 aa).

The residue at position 2 (Thr-2) is an N-acetylthreonine. A Phosphothreonine modification is found at Thr-2. The chain crosses the membrane as a helical span at residues 40–60 (TAYLALGGWFTGTTFVTSWYT). Chlorophyll a is bound at residue His-117. A helical transmembrane segment spans residues 124 to 140 (GFMLRQFEIARSVKIRP). 2 residues coordinate pheophytin a: Gln-129 and Asn-142. Residues 152 to 165 (VFVSVFLIYPLGQS) traverse the membrane as a helical segment. His-197 serves as a coordination point for chlorophyll a. Residues 207–227 (AALLCAIHGATVENTLFEDGD) traverse the membrane as a helical segment. The a plastoquinone site is built by His-214 and Phe-261. Residue His-214 participates in Fe cation binding. Residue His-268 participates in Fe cation binding. The helical transmembrane segment at 278–294 (GLWMSAIGVVGLALNLR) threads the bilayer.

Belongs to the reaction center PufL/M/PsbA/D family. In terms of assembly, PSII is composed of 1 copy each of membrane proteins PsbA, PsbB, PsbC, PsbD, PsbE, PsbF, PsbH, PsbI, PsbJ, PsbK, PsbL, PsbM, PsbT, PsbX, PsbY, PsbZ, Psb30/Ycf12, at least 3 peripheral proteins of the oxygen-evolving complex and a large number of cofactors. It forms dimeric complexes. Requires The D1/D2 heterodimer binds P680, chlorophylls that are the primary electron donor of PSII, and subsequent electron acceptors. It shares a non-heme iron and each subunit binds pheophytin, quinone, additional chlorophylls, carotenoids and lipids. There is also a Cl(-1) ion associated with D1 and D2, which is required for oxygen evolution. The PSII complex binds additional chlorophylls, carotenoids and specific lipids. as cofactor.

Its subcellular location is the plastid. It is found in the chloroplast thylakoid membrane. It carries out the reaction 2 a plastoquinone + 4 hnu + 2 H2O = 2 a plastoquinol + O2. Photosystem II (PSII) is a light-driven water:plastoquinone oxidoreductase that uses light energy to abstract electrons from H(2)O, generating O(2) and a proton gradient subsequently used for ATP formation. It consists of a core antenna complex that captures photons, and an electron transfer chain that converts photonic excitation into a charge separation. The D1/D2 (PsbA/PsbD) reaction center heterodimer binds P680, the primary electron donor of PSII as well as several subsequent electron acceptors. D2 is needed for assembly of a stable PSII complex. This is Photosystem II D2 protein from Chlorella vulgaris (Green alga).